The chain runs to 533 residues: NAD(P)H-quinone oxidoreductase chain 4 2 (533 aa).

Helical transmembrane passes span 5-25 (FPWLTVLTLLPLVAAFFIPVL), 33-53 (VRWYALAIALLEFGLSAMVFW), 86-106 (LAVPLILLTGLVNTLAIFAAW), 114-134 (LFYFLMLALYSAQIGVFAAQD), 135-155 (LILFFLIWELELVPVYLLISI), 168-188 (FILYTAVGSLFILIAGLGMAF), 208-228 (ALELLAYAGFLIAFGVKLPIF), 242-262 (SAPVSMVLAGVLLKMGGYGLI), 276-296 (FAPVLIALGVVNIIYGALTAF), 310-330 (ISHMGFVLLGIGALNGIGLNG), 331-351 (AMLQMLSHGLIAAVLFFLAGV), 384-404 (ASLALPGMSGFVSELTVFLGL), 416-436 (VGVIFLAAVGVIITPVYLLSM), and 462-482 (TFIALSLLVPIIAVGMYPKVA).

This sequence belongs to the complex I subunit 4 family.

Its subcellular location is the cellular thylakoid membrane. It catalyses the reaction a plastoquinone + NADH + (n+1) H(+)(in) = a plastoquinol + NAD(+) + n H(+)(out). The enzyme catalyses a plastoquinone + NADPH + (n+1) H(+)(in) = a plastoquinol + NADP(+) + n H(+)(out). In terms of biological role, NDH-1 shuttles electrons from NAD(P)H, via FMN and iron-sulfur (Fe-S) centers, to quinones in the respiratory chain. The immediate electron acceptor for the enzyme in this species is believed to be plastoquinone. Couples the redox reaction to proton translocation (for every two electrons transferred, four hydrogen ions are translocated across the cytoplasmic membrane), and thus conserves the redox energy in a proton gradient. The polypeptide is NAD(P)H-quinone oxidoreductase chain 4 2 (Thermosynechococcus vestitus (strain NIES-2133 / IAM M-273 / BP-1)).